Consider the following 335-residue polypeptide: MTENSDKVPIALVGPDDVEFCSPPAYAAVTVKPSSPARLLKVGAVVLISGAVLLLLGAIGAFYFWKGSDNHIYNVHYTMSINGKLQDGSMEIDAGNNLETFKMGSGAEEAVEVNDFQNGITGIRFAGGEKCYIKAQVKARIPEVGTMTKQSISSELEGKIMPVKYEENSLIWVAGDQPVKDNSFLSSKVLELCGDLPIFWLKPTYPKEIQRERRELVRKIVTTTTTRRLRSGPQGTPAPGRPNNGTRPSVQEDAEPFNPDNPYHQQEGESMTFDPRLDHEGICCIECRRSYTHCQKICEPLGGYHPWPYNYQGCRSACRVIMPCSWWVARILGMV.

A helical transmembrane segment spans residues 45–65 (VVLISGAVLLLLGAIGAFYFW). A BRICHOS domain is found at 104-201 (GSGAEEAVEV…LCGDLPIFWL (98 aa)). C131 and C193 are oxidised to a cystine. Residues 211–214 (RERR) constitute a propeptide that is removed on maturation. Positions 221 to 269 (VTTTTTRRLRSGPQGTPAPGRPNNGTRPSVQEDAEPFNPDNPYHQQEGE) are disordered. N-linked (GlcNAc...) asparagine; in variant 223-N-E-224 glycosylation is present at T223. T236 carries O-linked (GalNAc...) threonine; partial glycosylation. A glycan (N-linked (GlcNAc...) asparagine) is linked at N244. Cystine bridges form between C283–C287, C284–C324, C294–C318, and C298–C314.

Belongs to the chondromodulin-1 family. After cleavage, the post-translationally modified ChM-I is secreted as a glycoprotein. In terms of processing, two other smaller nonglycosylated chondromodulin forms (9 kDa and 7 kDa) are found either in developing articular cartilage or in chondrocytes. The 9 kDa form could be processed by an extracellular matrix-associated protease as a metalloproteinase and the 7 kDa form could be processed intracellularly. In terms of tissue distribution, nasal and articular cartilage, and fetal epiphysis.

It localises to the secreted. It is found in the extracellular space. Its subcellular location is the extracellular matrix. The protein localises to the endomembrane system. Functionally, bifunctional growth regulator that stimulates the growth of cultured chondrocytes in the presence of basic fibroblast growth factor (FGF) but inhibits the growth of cultured vascular endothelial cells. May contribute to the rapid growth of cartilage and vascular invasion prior to the replacement of cartilage by bone during endochondral bone development. Inhibits in vitro tube formation and mobilization of endothelial cells. Plays a role as antiangiogenic factor in cardiac valves to suppress neovascularization. In Bos taurus (Bovine), this protein is Leukocyte cell-derived chemotaxin 1.